Reading from the N-terminus, the 504-residue chain is Tachykinin-like peptides receptor 86C (504 aa).

Over 1–84 (MSEIVDTELL…PYELPWEQKT (84 aa)) the chain is Extracellular. 3 N-linked (GlcNAc...) asparagine glycosylation sites follow: Asn-12, Asn-28, and Asn-36. The chain crosses the membrane as a helical span at residues 85–108 (IWAIIFGLMMFVAIAGNGIVLWIV). Topologically, residues 109–118 (TGHRSMRTVT) are cytoplasmic. A helical transmembrane segment spans residues 119-143 (NYFLLNLSIADLLMSSLNCVFNFIF). Residues 144-155 (MLNSDWPFGSIY) are Extracellular-facing. A helical membrane pass occupies residues 156–179 (CTINNFVANVTVSTSVFTLVAISF). The Cytoplasmic portion of the chain corresponds to 180–199 (DRYIAIVHPLKRRTSRRKVR). The chain crosses the membrane as a helical span at residues 200–224 (IILVLIWALSCVLSAPCLLYSSIMT). Over 225 to 250 (KHYYNGKSRTVCFMMWPDGRYPTSMA) the chain is Extracellular. Residues 251–275 (DYAYNLIILVLTYGIPMIVMLICYS) form a helical membrane-spanning segment. Residues 276-308 (LMGRVLWGSRSIGENTDRQMESMKSKRKVVRMF) are Cytoplasmic-facing. Residues 309-330 (IAIVSIFAICWLPYHLFFIYAY) traverse the membrane as a helical segment. The Extracellular segment spans residues 331–343 (HNNQVASTKYVQH). A helical transmembrane segment spans residues 344 to 367 (MYLGFYWLAMSNAMVNPLIYYWMN). Residues 368 to 504 (KRFRMYFQRI…NPVELSPKQM (137 aa)) lie on the Cytoplasmic side of the membrane. Positions 393–450 (PKSRLTNKNSSNRHTRAETKSQWKRSTMETQIQQAPVTSSCREQRSAQQQQPPGSGTN) are disordered. Composition is skewed to polar residues over residues 395-404 (SRLTNKNSSN) and 416-450 (KRST…SGTN).

It belongs to the G-protein coupled receptor 1 family. As to expression, expressed in central nervous system, as well as in subsets of neurons in each segment of the developing ventral ganglia.

It is found in the cell membrane. In terms of biological role, receptor for tachykinin-like peptides. In Drosophila melanogaster (Fruit fly), this protein is Tachykinin-like peptides receptor 86C (TkR86C).